The chain runs to 996 residues: GPI ethanolamine phosphate transferase 1 (996 aa).

The Cytoplasmic portion of the chain corresponds to 1–8; sequence MAAFPRFR. Residues 9–29 traverse the membrane as a helical segment; that stretch reads FLAIAVIFHFAYIFSIFDIYF. Over 30-463 the chain is Lumenal; that stretch reads VSPIETGMRL…LQTYDWLFLR (434 aa). N-linked (GlcNAc...) asparagine glycans are attached at residues asparagine 47, asparagine 147, and asparagine 210. Residues 464 to 484 form a helical membrane-spanning segment; that stretch reads ALITIGYLGWIAYALTTVVDL. Topologically, residues 485–495 are cytoplasmic; the sequence is HVLHGRVRPSR. The chain crosses the membrane as a helical span at residues 496-516; the sequence is TLGGGLFFTSVLVALYASLVI. The Lumenal portion of the chain corresponds to 517 to 518; it reads SK. A helical membrane pass occupies residues 519–539; it reads SPLTYYVYAFFPVFFWEEVYA. At 540 to 560 the chain is on the cytoplasmic side; sequence HRESLAAGRKELLGHINSGGS. A helical transmembrane segment spans residues 561–581; it reads VASFVLNSALYVGVIESLALG. Residues 582–586 are Lumenal-facing; it reads YIHRE. The chain crosses the membrane as a helical span at residues 587-607; the sequence is ILSVLFVLGSFWPFTHGLSFL. Topologically, residues 608 to 612 are cytoplasmic; sequence KKHGA. A helical transmembrane segment spans residues 613 to 633; it reads LSATWFLACIAMSTFTLLPAM. Over 634-637 the chain is Lumenal; the sequence is KAEN. The helical transmembrane segment at 638–658 threads the bilayer; the sequence is VNLITIGGVLMVVIGLLYLIF. Residues 659 to 681 lie on the Cytoplasmic side of the membrane; the sequence is EDFVLADFSWNAKPTSRNHLSRS. A helical membrane pass occupies residues 682 to 702; the sequence is LVGIQVGLTVLSIIITRSSAL. The Lumenal segment spans residues 703-715; that stretch reads SLQAKQGLPRGNQ. Residues 716–734 traverse the membrane as a helical segment; sequence IMGWVTLVASLLMPLAYRL. Residues 735-754 are Cytoplasmic-facing; it reads RPNNHYMHRILVIFLTCAPT. The chain crosses the membrane as a helical span at residues 755 to 775; that stretch reads FVILTISYEGLFYLVFSALLV. Residues 776–822 lie on the Lumenal side of the membrane; that stretch reads SWVRLEHAVQKFTSSKAPQTAATKKPTTTTESHLPAPFRPLTLHDAR. The chain crosses the membrane as a helical span at residues 823 to 843; it reads VALFFFILLQSAFFSTGNVAS. At 844–865 the chain is on the cytoplasmic side; the sequence is VSSFSLDSVYRLIPIFDPFSQG. A helical membrane pass occupies residues 866–886; the sequence is AMLILKLMIPFALISANLGIL. Residues 887-895 lie on the Lumenal side of the membrane; that stretch reads NKRLGVAPS. A helical membrane pass occupies residues 896–916; that stretch reads ALFMVVMGISDILTLYFFWVV. At 917-932 the chain is on the cytoplasmic side; the sequence is KDEGSWLEIGSTISHF. Residues 933–953 form a helical membrane-spanning segment; that stretch reads VIASLLCVFVSALEPVSAAFI. Residues 954–996 are Lumenal-facing; that stretch reads AGVEVGEESELKEEGKVAEKVVEKVNEAVEGLVSGGDGGGDES.

The protein belongs to the PIGG/PIGN/PIGO family. PIGN subfamily.

The protein resides in the endoplasmic reticulum membrane. Its pathway is glycolipid biosynthesis; glycosylphosphatidylinositol-anchor biosynthesis. In terms of biological role, ethanolamine phosphate transferase involved in glycosylphosphatidylinositol-anchor biosynthesis. Transfers ethanolamine phosphate to the first alpha-1,4-linked mannose of the glycosylphosphatidylinositol precursor of GPI-anchor. The protein is GPI ethanolamine phosphate transferase 1 (mcd-4) of Neurospora crassa (strain ATCC 24698 / 74-OR23-1A / CBS 708.71 / DSM 1257 / FGSC 987).